Here is a 68-residue protein sequence, read N- to C-terminus: Large ribosomal subunit protein uL29 (68 aa).

The protein belongs to the universal ribosomal protein uL29 family.

The sequence is that of Large ribosomal subunit protein uL29 from Chlorobaculum tepidum (strain ATCC 49652 / DSM 12025 / NBRC 103806 / TLS) (Chlorobium tepidum).